Here is a 435-residue protein sequence, read N- to C-terminus: Mitochondrial association factor 1 form b0 (435 aa).

An N-terminal signal peptide occupies residues 1–27; it reads MWRIWRCRLSFLFVTGCLLGALTAGLG. Residues 28-96 are Vacuolar-facing; sequence SQMSDSVGRN…VTARRRRNRR (69 aa). The disordered stretch occupies residues 43-89; that stretch reads GVADASQEAGDVVEERTERTEEQVFAPGPPRRHSSESLFPRNPSVTA. Residues 55–64 are compositionally biased toward basic and acidic residues; that stretch reads VEERTERTEE. A helical transmembrane segment spans residues 97-117; the sequence is ITLIATAVGVAVILAALYVLR. The Cytoplasmic portion of the chain corresponds to 118–435; that stretch reads RRRAQPPQEP…ESTYLASMLD (318 aa). Positions 120–162 are disordered; sequence RAQPPQEPEPPTRLRTPRPRAPSGQQQPSESEPPAGVPMKPGS.

Its subcellular location is the parasitophorous vacuole membrane. In terms of biological role, during host cell infection by tachyzoites, does not play a role in tethering the parasitophorous vacuole to the host mitochondria. This Toxoplasma gondii protein is Mitochondrial association factor 1 form b0.